The sequence spans 76 residues: SCIDIGGDCDGEKDDCQCCRRNGYCSCYSLFGYLKSGCKCVVGTSAEFQGICRRKARQCYNSDPDKCESHNKPKRR.

Disulfide bonds link cysteine 2–cysteine 19, cysteine 9–cysteine 25, cysteine 16–cysteine 52, cysteine 18–cysteine 40, cysteine 27–cysteine 38, and cysteine 59–cysteine 67.

This sequence belongs to the neurotoxin 04 (omega-agtx) family. 03 (type II/III omega-agtx) subfamily. In terms of tissue distribution, expressed by the venom gland.

It localises to the secreted. Functionally, omega-agatoxin are antagonist of voltage-gated calcium channels. They block insect neuromuscular transmission presynaptically. Potent blocker of N- (Cav2.2/CACNA1B) and L-type (Cav1/CACNA1) calcium channels. In Agelenopsis aperta (North American funnel-web spider), this protein is Omega-agatoxin-Aa3a.